We begin with the raw amino-acid sequence, 102 residues long: Small ribosomal subunit protein uS10 (102 aa).

The protein belongs to the universal ribosomal protein uS10 family. Part of the 30S ribosomal subunit.

In terms of biological role, involved in the binding of tRNA to the ribosomes. This Rhodospirillum rubrum (strain ATCC 11170 / ATH 1.1.1 / DSM 467 / LMG 4362 / NCIMB 8255 / S1) protein is Small ribosomal subunit protein uS10.